Reading from the N-terminus, the 123-residue chain is Small ribosomal subunit protein bS18 (123 aa).

Over residues 1–10 (MADETTVSTP) the composition is skewed to polar residues. Residues 1-52 (MADETTVSTPAASGTETPSTGGGGAPQGRPQGGPRGDRGPRPGGSGRDGGRK) are disordered. Residues 20-34 (TGGGGAPQGRPQGGP) are compositionally biased toward gly residues.

The protein belongs to the bacterial ribosomal protein bS18 family. Part of the 30S ribosomal subunit. Forms a tight heterodimer with protein bS6.

Binds as a heterodimer with protein bS6 to the central domain of the 16S rRNA, where it helps stabilize the platform of the 30S subunit. This is Small ribosomal subunit protein bS18 from Koribacter versatilis (strain Ellin345).